We begin with the raw amino-acid sequence, 311 residues long: tRNA dimethylallyltransferase (311 aa).

Position 10 to 17 (10 to 17 (GPTASGKT)) interacts with ATP. Residue 12–17 (TASGKT) participates in substrate binding. Interaction with substrate tRNA stretches follow at residues 35-38 (DSAL), 159-163 (QRINR), and 240-245 (RCVGYR).

The protein belongs to the IPP transferase family. In terms of assembly, monomer. Mg(2+) serves as cofactor.

The enzyme catalyses adenosine(37) in tRNA + dimethylallyl diphosphate = N(6)-dimethylallyladenosine(37) in tRNA + diphosphate. Catalyzes the transfer of a dimethylallyl group onto the adenine at position 37 in tRNAs that read codons beginning with uridine, leading to the formation of N6-(dimethylallyl)adenosine (i(6)A). The chain is tRNA dimethylallyltransferase from Haemophilus influenzae (strain PittEE).